Reading from the N-terminus, the 201-residue chain is Adenylyl-sulfate kinase (201 aa).

Position 35–42 (35–42 (GLSGSGKS)) interacts with ATP. The Phosphoserine intermediate role is filled by Ser109.

This sequence belongs to the APS kinase family.

The catalysed reaction is adenosine 5'-phosphosulfate + ATP = 3'-phosphoadenylyl sulfate + ADP + H(+). The protein operates within sulfur metabolism; hydrogen sulfide biosynthesis; sulfite from sulfate: step 2/3. Its function is as follows. Catalyzes the synthesis of activated sulfate. The chain is Adenylyl-sulfate kinase from Klebsiella pneumoniae (strain 342).